Consider the following 262-residue polypeptide: LysM domain-containing protein ARB_03438 (262 aa).

The N-terminal stretch at 1–22 (MVSIPLILGAIILLGTRKAATA) is a signal peptide. Residues 31–75 (FAVTAATDDTCQSLGAQWGIGMAQFLKWNPGVNCNALVAGKTYCL) enclose the LysM 1 domain. The segment at 85 to 112 (TASLTPSPQVPTTSRATQTMTSKASTGT) is disordered. Polar residues predominate over residues 86–112 (ASLTPSPQVPTTSRATQTMTSKASTGT). The region spanning 132–179 (FYHPVSPGDTCQSIVDRYKAFTLDQFYTWNPSVGKNCESLWLGYYVCT) is the LysM 2 domain. A disordered region spans residues 184-240 (GPNSPSQQPPSQQPPSQQSPSQQSPSQQSPSQQPPSQQPPSQQPPSQQSNTSQQTQP). Positions 197-214 (PPSQQSPSQQSPSQQSPS) are enriched in low complexity. Positions 215 to 226 (QQPPSQQPPSQQ) are enriched in pro residues. Over residues 227-240 (PPSQQSNTSQQTQP) the composition is skewed to low complexity. N233 carries an N-linked (GlcNAc...) asparagine glycan.

Its subcellular location is the secreted. Functionally, might have a role in sequestration of chitin oligosaccharides (breakdown products of fungal cell walls that are released during invasion and act as triggers of host immunity) to dampen host defense. This Arthroderma benhamiae (strain ATCC MYA-4681 / CBS 112371) (Trichophyton mentagrophytes) protein is LysM domain-containing protein ARB_03438.